Consider the following 183-residue polypeptide: MSIQEHVILVNDQGEVVGTQEKYAAHTSHTSLHLAFSSWLFNDRGQCLVTRRALSKIAWPGVWTNSVCGHPQIGETTEQAIARRCRFEVGVEIAQLTPIAADFRYCEIDPSGIVENEICPVFAAQIVSPLKVNPDEVMDYQWVELTSLLRALEATPWAFSPWMVSEAANASEKLKHFADNVKA.

Residues H26 and H33 each coordinate Mn(2+). One can recognise a Nudix hydrolase domain in the interval 31–165; that stretch reads SLHLAFSSWL…PWAFSPWMVS (135 aa). The active site involves C68. H70 serves as a coordination point for Mn(2+). Position 88 (E88) interacts with Mg(2+). Residues E115 and E117 each contribute to the Mn(2+) site. The active site involves E117.

Belongs to the IPP isomerase type 1 family. As to quaternary structure, homodimer. Mg(2+) is required as a cofactor. It depends on Mn(2+) as a cofactor.

Its subcellular location is the cytoplasm. The catalysed reaction is isopentenyl diphosphate = dimethylallyl diphosphate. It functions in the pathway isoprenoid biosynthesis; dimethylallyl diphosphate biosynthesis; dimethylallyl diphosphate from isopentenyl diphosphate: step 1/1. Catalyzes the 1,3-allylic rearrangement of the homoallylic substrate isopentenyl (IPP) to its highly electrophilic allylic isomer, dimethylallyl diphosphate (DMAPP). This Enterobacter sp. (strain 638) protein is Isopentenyl-diphosphate Delta-isomerase.